We begin with the raw amino-acid sequence, 312 residues long: Malate dehydrogenase (312 aa).

NAD(+) is bound by residues 7 to 13 (GAAGGIG) and aspartate 34. The substrate site is built by arginine 81 and arginine 87. Residues asparagine 94 and 117–119 (ITN) each bind NAD(+). The substrate site is built by asparagine 119 and arginine 153. Histidine 177 serves as the catalytic Proton acceptor. An NAD(+)-binding site is contributed by methionine 227.

This sequence belongs to the LDH/MDH superfamily. MDH type 1 family. Homodimer.

It carries out the reaction (S)-malate + NAD(+) = oxaloacetate + NADH + H(+). In terms of biological role, catalyzes the reversible oxidation of malate to oxaloacetate. The sequence is that of Malate dehydrogenase from Escherichia fergusonii (strain ATCC 35469 / DSM 13698 / CCUG 18766 / IAM 14443 / JCM 21226 / LMG 7866 / NBRC 102419 / NCTC 12128 / CDC 0568-73).